The chain runs to 754 residues: 17S U2 SnRNP complex component HTATSF1 (754 aa).

Disordered stretches follow at residues 1 to 53 (MSGT…YEWD) and 81 to 122 (GASS…KAES). S2 bears the N-acetylserine mark. Positions 90–122 (EDVHARTAEEPPQEKAPEPTDPRKKGEKRKAES) are enriched in basic and acidic residues. 2 consecutive RRM domains span residues 133–218 (TNVY…VAKF) and 264–349 (RVVI…AWDG). Residues 259–353 (RMRHERVVII…AQAWDGTTDY (95 aa)) are U2AF homology motif (UHM). Position 297 is an N6-acetyllysine (K297). The interval 380-415 (RGLRRSDSVSASERAGPSRARHFSEHPSTSKMNAQE) is disordered. The segment at 381–754 (GLRRSDSVSA…ILSSDDDDDI (374 aa)) is mediates interaction with the P-TEFb complex. S387, S403, S407, and S409 each carry phosphoserine. Residues 405–415 (HPSTSKMNAQE) show a composition bias toward polar residues. Residues K429 and K430 each participate in a glycyl lysine isopeptide (Lys-Gly) (interchain with G-Cter in SUMO2) cross-link. Residues 433–754 (KTEDGGEFEE…ILSSDDDDDI (322 aa)) form a disordered region. S445, S452, and S453 each carry phosphoserine. Basic and acidic residues predominate over residues 462–476 (CPGKESEEGCPKRGF). Residues S481, S485, S494, S498, S521, and S529 each carry the phosphoserine modification. The segment covering 508-538 (LRNDCEENGFAKESEDDPNKESEEEVGPTKE) has biased composition (basic and acidic residues). Residues 539 to 552 (SEEDDSEKESDEDC) are compositionally biased toward acidic residues. Positions 553 to 563 (SEKQSEDGSER) are enriched in basic and acidic residues. 3 positions are modified to phosphoserine: S557, S561, and S579. Over residues 564–579 (EFEENGLEKDLDEEGS) the composition is skewed to acidic residues. The span at 580–590 (EKELHENVLDK) shows a compositional bias: basic and acidic residues. A compositionally biased stretch (acidic residues) spans 591-606 (ELEENDSENSEFEDDG). A phosphoserine mark is found at S597, S600, S607, S616, and S624. Acidic residues-rich tracts occupy residues 613–633 (EEGSEREFDEDSDEKEEEEDT) and 640–651 (DESNEKEDEEYA). Position 633 is a phosphothreonine (T633). S642 is modified (phosphoserine). Residues 652-674 (DEKGLEAADKKEEEGDADEKLFE) show a composition bias toward basic and acidic residues. Residues 675–713 (ESDDKEDEDADGKEVEDADEKLFEDDDSNEKLFDEEEDS) show a composition bias toward acidic residues. 5 positions are modified to phosphoserine: S676, S702, S713, S721, and S748. Basic and acidic residues predominate over residues 714 to 725 (NEKLFDDSDERG).

Belongs to the HTATSF1 family. Component of the 17S U2 SnRNP complex, a ribonucleoprotein complex that contains small nuclear RNA (snRNA) U2 and a number of specific proteins. Within the 17S U2 SnRNP complex, interacts (via UHM region) directly with SF3B1. Component of a complex which is at least composed of HTATSF1/Tat-SF1, the P-TEFb complex components CDK9 and CCNT1, RNA polymerase II, SUPT5H, and NCL/nucleolin. Interacts with GTF2F2/RAP30 and POLR2A. Interacts with TCERG1/CA150. Interacts with (poly-ADP-ribosylated) RPA1; promoting HTATSF1 recruitment to DNA damage sites. Interacts (when phosphorylated) with TOPBP1; promoting recruitment of TOPBP1 to DNA damage sites during S-phase. In terms of processing, phosphorylation at Ser-748 by CK2 during S-phase in response to DNA damage promotes interaction with TOPBP1 and double-strand break (DSB) repair via homologous recombination.

The protein localises to the nucleus. It localises to the chromosome. Component of the 17S U2 SnRNP complex of the spliceosome, a large ribonucleoprotein complex that removes introns from transcribed pre-mRNAs. The 17S U2 SnRNP complex (1) directly participates in early spliceosome assembly and (2) mediates recognition of the intron branch site during pre-mRNA splicing by promoting the selection of the pre-mRNA branch-site adenosine, the nucleophile for the first step of splicing. Within the 17S U2 SnRNP complex, HTATSF1 is required to stabilize the branchpoint-interacting stem loop. HTATSF1 is displaced from the 17S U2 SnRNP complex before the stable addition of the 17S U2 SnRNP complex to the spliceosome, destabilizing the branchpoint-interacting stem loop and allowing to probe intron branch site sequences. Also acts as a regulator of transcriptional elongation, possibly by mediating the reciprocal stimulatory effect of splicing on transcriptional elongation. Involved in double-strand break (DSB) repair via homologous recombination in S-phase by promoting the recruitment of TOPBP1 to DNA damage sites. Mechanistically, HTATSF1 is (1) recruited to DNA damage sites in S-phase via interaction with poly-ADP-ribosylated RPA1 and (2) phosphorylated by CK2, promoting recruitment of TOPBP1, thereby facilitating RAD51 nucleofilaments formation and RPA displacement, followed by homologous recombination. The polypeptide is 17S U2 SnRNP complex component HTATSF1 (HTATSF1) (Pongo abelii (Sumatran orangutan)).